Reading from the N-terminus, the 394-residue chain is 1-deoxy-D-xylulose 5-phosphate reductoisomerase (394 aa).

Positions 6, 7, 8, 9, 32, and 124 each coordinate NADPH. K125 contributes to the 1-deoxy-D-xylulose 5-phosphate binding site. E126 is an NADPH binding site. Position 148 (D148) interacts with Mn(2+). S149, E150, S174, and H197 together coordinate 1-deoxy-D-xylulose 5-phosphate. E150 lines the Mn(2+) pocket. G203 provides a ligand contact to NADPH. Residues S210, N215, K216, and E219 each contribute to the 1-deoxy-D-xylulose 5-phosphate site. Position 219 (E219) interacts with Mn(2+).

The protein belongs to the DXR family. The cofactor is Mg(2+). Mn(2+) serves as cofactor.

It carries out the reaction 2-C-methyl-D-erythritol 4-phosphate + NADP(+) = 1-deoxy-D-xylulose 5-phosphate + NADPH + H(+). Its pathway is isoprenoid biosynthesis; isopentenyl diphosphate biosynthesis via DXP pathway; isopentenyl diphosphate from 1-deoxy-D-xylulose 5-phosphate: step 1/6. Its function is as follows. Catalyzes the NADPH-dependent rearrangement and reduction of 1-deoxy-D-xylulose-5-phosphate (DXP) to 2-C-methyl-D-erythritol 4-phosphate (MEP). The chain is 1-deoxy-D-xylulose 5-phosphate reductoisomerase from Streptomyces avermitilis (strain ATCC 31267 / DSM 46492 / JCM 5070 / NBRC 14893 / NCIMB 12804 / NRRL 8165 / MA-4680).